The sequence spans 525 residues: GMP synthase [glutamine-hydrolyzing] (525 aa).

A Glutamine amidotransferase type-1 domain is found at 8–207; that stretch reads KILILDFGSQ…ALDICGCAAN (200 aa). Residue Cys-85 is the Nucleophile of the active site. Catalysis depends on residues His-181 and Glu-183. Residues 208–400 enclose the GMPS ATP-PPase domain; it reads WKPSSIIEDA…LGLPYNMLYR (193 aa). 235–241 provides a ligand contact to ATP; sequence SGGVDSS.

Homodimer.

The enzyme catalyses XMP + L-glutamine + ATP + H2O = GMP + L-glutamate + AMP + diphosphate + 2 H(+). Its pathway is purine metabolism; GMP biosynthesis; GMP from XMP (L-Gln route): step 1/1. Its function is as follows. Catalyzes the synthesis of GMP from XMP. This Shewanella oneidensis (strain ATCC 700550 / JCM 31522 / CIP 106686 / LMG 19005 / NCIMB 14063 / MR-1) protein is GMP synthase [glutamine-hydrolyzing].